The sequence spans 305 residues: Protein-methionine-sulfoxide reductase catalytic subunit MsrP (305 aa).

The tat-type signal signal peptide spans 1–54 (MLIRKPADHLPSEITSESVYFNRRQFMAGAAGLLLSAETLAGLAAKKSPLSQLA). Residues Asn-69, 72–73 (YE), Cys-126, Thr-161, Asn-209, Arg-214, and 225–227 (SIK) each bind Mo-molybdopterin.

This sequence belongs to the MsrP family. Heterodimer of a catalytic subunit (MsrP) and a heme-binding subunit (MsrQ). It depends on Mo-molybdopterin as a cofactor. Predicted to be exported by the Tat system. The position of the signal peptide cleavage has not been experimentally proven.

The protein localises to the periplasm. The enzyme catalyses L-methionyl-[protein] + a quinone + H2O = L-methionyl-(S)-S-oxide-[protein] + a quinol. It catalyses the reaction L-methionyl-[protein] + a quinone + H2O = L-methionyl-(R)-S-oxide-[protein] + a quinol. Functionally, part of the MsrPQ system that repairs oxidized periplasmic proteins containing methionine sulfoxide residues (Met-O), using respiratory chain electrons. Thus protects these proteins from oxidative-stress damage caused by reactive species of oxygen and chlorine generated by the host defense mechanisms. MsrPQ is essential for the maintenance of envelope integrity under bleach stress, rescuing a wide series of structurally unrelated periplasmic proteins from methionine oxidation. The catalytic subunit MsrP is non-stereospecific, being able to reduce both (R-) and (S-) diastereoisomers of methionine sulfoxide. This Chromobacterium violaceum (strain ATCC 12472 / DSM 30191 / JCM 1249 / CCUG 213 / NBRC 12614 / NCIMB 9131 / NCTC 9757 / MK) protein is Protein-methionine-sulfoxide reductase catalytic subunit MsrP.